A 116-amino-acid polypeptide reads, in one-letter code: Vesicle-associated membrane protein 2 (116 aa).

The interval 1–33 (MSATAATAPPAAPAGEGGPPAPPPNLTSNRRLQ) is disordered. Ser2 carries the post-translational modification N-acetylserine. Over 2–94 (SATAATAPPA…KRKYWWKNLK (93 aa)) the chain is Cytoplasmic. In terms of domain architecture, v-SNARE coiled-coil homology spans 31–91 (RLQQTQAQVD…AKLKRKYWWK (61 aa)). The tract at residues 92–116 (NLKMMIILGVICAIILIIIIVYFSS) is required for interaction with SEPT8. Residues 95–114 (MMIILGVICAIILIIIIVYF) form a helical; Anchor for type IV membrane protein membrane-spanning segment. Topologically, residues 115-116 (SS) are vesicular.

The protein belongs to the synaptobrevin family. In terms of assembly, part of the SNARE core complex containing SNAP25, VAMP2 and STX1A; this complex constitutes the basic catalytic machinery of the complex neurotransmitter release apparatus. Recruited to the SNARE complex following binding of the SNARE complex component STX1A to STXBP1. This complex binds to CPLX1. Interacts with POPDC1 and STX4. Interacts with VAPA and VAPB. Interacts with WDFY2, PRKCZ and PRKCI. Forms a complex with WDFY2 and PRKCZ. Interacts (via N-terminus) with KCNB1 (via N-terminus and C-terminus); stimulates the channel inactivation rate of KCNB1. Interacts with SEPT8; the interaction inhibits interaction of VAMP2 with SYP. Interacts with SYP; the interaction is inhibited by interaction with SEPT8. Interacts with PICALM. Interacts with alpha-synuclein/SNCA. Interacts with STX3. In terms of processing, phosphorylated by PRKCZ in vitro and this phosphorylation is increased in the presence of WDFY2.

Its subcellular location is the cytoplasmic vesicle. The protein resides in the secretory vesicle. The protein localises to the synaptic vesicle membrane. It is found in the cell membrane. Involved in the targeting and/or fusion of transport vesicles to their target membrane. Major SNARE protein of synaptic vesicles which mediates fusion of synaptic vesicles to release neurotransmitters. Essential for fast vesicular exocytosis and activity-dependent neurotransmitter release as well as fast endocytosis that mediates rapid reuse of synaptic vesicles. Modulates the gating characteristics of the delayed rectifier voltage-dependent potassium channel KCNB1. The protein is Vesicle-associated membrane protein 2 (VAMP2) of Bos taurus (Bovine).